The following is an 824-amino-acid chain: Fibroblast growth factor receptor 2 (824 aa).

Positions 1–21 (MFSWSYLMGLVMVATATLSLA) are cleaved as a signal peptide. Topologically, residues 22–374 (RPSYNIAEDT…LDSSSSEYTE (353 aa)) are extracellular. One can recognise an Ig-like C2-type 1 domain in the interval 25 to 125 (YNIAEDTTLE…ETRYFIVNIT (101 aa)). Cysteines 62 and 107 form a disulfide. Residues N83, N123, and N128 are each glycosylated (N-linked (GlcNAc...) asparagine). Positions 125–152 (TDGNSSGDDEDDNDGSEDFTNDNNHKRA) are disordered. Acidic residues predominate over residues 131–144 (GDDEDDNDGSEDFT). 2 Ig-like C2-type domains span residues 153–246 (PYWT…YHLD) and 254–356 (PPIL…AWLT). Residues 160-177 (KLEKKLHAVPAANTVKFR) are heparin-binding. A disulfide bridge connects residues C178 and C230. N-linked (GlcNAc...) asparagine glycosylation is found at N227, N240, N264, N295, N316, and N329. A disulfide bond links C277 and C340. Residues 375-395 (IAIYCVGGFLIACMIGTIMMC) form a helical membrane-spanning segment. Over 396–824 (HMKGRGKKSD…PLKHEATQPA (429 aa)) the chain is Cytoplasmic. Position 463 is a phosphotyrosine; by autocatalysis (Y463). The Protein kinase domain maps to 478–767 (LTLGKPLGEG…LTQTTNEEYL (290 aa)). Residues 484 to 492 (LGEGCFGQV), K514, 562 to 564 (EYA), and N568 contribute to the ATP site. A Phosphotyrosine; by autocatalysis modification is found at Y583. D623 functions as the Proton acceptor in the catalytic mechanism. 3 positions are modified to phosphotyrosine; by autocatalysis: Y653, Y654, and Y766. The disordered stretch occupies residues 801-824 (SMNLAFPNPNTQMAPLKHEATQPA).

This sequence belongs to the protein kinase superfamily. Tyr protein kinase family. Fibroblast growth factor receptor subfamily. Monomer. Homodimer after ligand binding. Post-translationally, autophosphorylated. Binding of FGF family members together with heparan sulfate proteoglycan or heparin promotes receptor dimerization and autophosphorylation on tyrosine residues. Autophosphorylation occurs in trans between the two FGFR molecules present in the dimer. N-glycosylated in the endoplasmic reticulum. The N-glycan chains undergo further maturation to an Endo H-resistant form in the Golgi apparatus. In terms of processing, ubiquitinated. FGFR2 is rapidly ubiquitinated after autophosphorylation, leading to internalization and degradation. Subject to degradation both in lysosomes and by the proteasome.

It is found in the cell membrane. The protein localises to the golgi apparatus. The protein resides in the cytoplasmic vesicle. The catalysed reaction is L-tyrosyl-[protein] + ATP = O-phospho-L-tyrosyl-[protein] + ADP + H(+). Its activity is regulated as follows. Present in an inactive conformation in the absence of bound ligand. Ligand binding leads to dimerization and activation by autophosphorylation on tyrosine residues. Functionally, tyrosine-protein kinase that acts as a cell-surface receptor for fibroblast growth factors and plays an essential role in the regulation of cell proliferation, differentiation, migration and apoptosis, and in the regulation of embryonic development. Required for normal embryonic patterning, limb bud development, lung morphogenesis, osteogenesis and skin development. Plays an essential role in the regulation of osteoblast differentiation, proliferation and apoptosis, and is required for normal skeleton development. Promotes cell proliferation in keratinocytes and immature osteoblasts, but promotes apoptosis in differentiated osteoblasts. Phosphorylates PLCG1, FRS2 and PAK4. Ligand binding leads to the activation of several signaling cascades. Activation of PLCG1 leads to the production of the cellular signaling molecules diacylglycerol and inositol 1,4,5-trisphosphate. Phosphorylation of FRS2 triggers recruitment of GRB2, GAB1, PIK3R1 and SOS1, and mediates activation of RAS, MAPK1/ERK2, MAPK3/ERK1 and the MAP kinase signaling pathway, as well as of the AKT1 signaling pathway. FGFR2 signaling is down-regulated by ubiquitination, internalization and degradation. Mutations that lead to constitutive kinase activation or impair normal FGFR2 maturation, internalization and degradation lead to aberrant signaling. Over-expressed FGFR2 promotes activation of STAT1. This chain is Fibroblast growth factor receptor 2 (FGFR2), found in Pleurodeles waltl (Iberian ribbed newt).